A 92-amino-acid polypeptide reads, in one-letter code: Large ribosomal subunit protein bL25 (92 aa).

The protein belongs to the bacterial ribosomal protein bL25 family. Part of the 50S ribosomal subunit; part of the 5S rRNA/L5/L18/L25 subcomplex. Contacts the 5S rRNA. Binds to the 5S rRNA independently of L5 and L18.

This is one of the proteins that binds to the 5S RNA in the ribosome where it forms part of the central protuberance. In Aliivibrio fischeri (strain ATCC 700601 / ES114) (Vibrio fischeri), this protein is Large ribosomal subunit protein bL25.